We begin with the raw amino-acid sequence, 419 residues long: UDP-N-acetylglucosamine 1-carboxyvinyltransferase (419 aa).

Residue lysine 22 to asparagine 23 coordinates phosphoenolpyruvate. Position 91 (arginine 91) interacts with UDP-N-acetyl-alpha-D-glucosamine. The Proton donor role is filled by cysteine 115. Position 115 is a 2-(S-cysteinyl)pyruvic acid O-phosphothioketal (cysteine 115). UDP-N-acetyl-alpha-D-glucosamine contacts are provided by residues arginine 120 to leucine 124, lysine 160 to valine 163, aspartate 305, and isoleucine 327.

Belongs to the EPSP synthase family. MurA subfamily.

The protein resides in the cytoplasm. It catalyses the reaction phosphoenolpyruvate + UDP-N-acetyl-alpha-D-glucosamine = UDP-N-acetyl-3-O-(1-carboxyvinyl)-alpha-D-glucosamine + phosphate. It participates in cell wall biogenesis; peptidoglycan biosynthesis. In terms of biological role, cell wall formation. Adds enolpyruvyl to UDP-N-acetylglucosamine. The sequence is that of UDP-N-acetylglucosamine 1-carboxyvinyltransferase from Tolumonas auensis (strain DSM 9187 / NBRC 110442 / TA 4).